Here is a 506-residue protein sequence, read N- to C-terminus: Tripartite terminase subunit 3 (506 aa).

Glu-128 (for ATPase activity) is an active-site residue. Residues Asp-282, Glu-354, and Asp-475 each act as for nuclease activity in the active site.

Belongs to the herpesviridae TRM3 protein family. Interacts with the terminase subunits TRM1 and TRM2. Interacts with portal protein.

The protein localises to the host nucleus. Component of the molecular motor that translocates viral genomic DNA in empty capsid during DNA packaging. Forms a tripartite terminase complex together with TRM1 and TRM2 in the host cytoplasm. Once the complex reaches the host nucleus, it interacts with the capsid portal vertex. This portal forms a ring in which genomic DNA is translocated into the capsid. TRM3 carries an RNase H-like nuclease activity that plays an important role for the cleavage of concatemeric viral DNA into unit length genomes. This is Tripartite terminase subunit 3 from Amazona oratrix (yellow-headed parrot).